Consider the following 208-residue polypeptide: MATSAVPSDNLPTYKLVVVGDGGVGKSALTIQFFQKIFVPDYDPTIEDSYLKHTEIDNQWAILDVLDTAGQEEFSAMREQYMRTGDGFLIVYSVTDKASFEHVDRFHQLILRVKDRESFPMILVANKVDLMHLRKITREQGKEMATKHNIPYIETSAKDPPLNVDKAFHDLVRVIRQQIPEKSQKKKKKTKWRGDRATGTHKLQCVIL.

GTP is bound by residues Asp21, Gly22, Gly23, Val24, Gly25, Lys26, Ser27, Ala28, Phe38, Val39, Pro40, Tyr42, Pro44, and Thr45. A Mg(2+)-binding site is contributed by Ser27. An Effector region motif is present at residues 42 to 50; the sequence is YDPTIEDSY. The Mg(2+) site is built by Thr45 and Asp67. Residues Gly70, Asn126, Lys127, Asp129, Ser156, Ala157, and Lys158 each coordinate GTP. The residue at position 205 (Cys205) is a Cysteine methyl ester. Cys205 carries S-geranylgeranyl cysteine lipidation. Positions 206–208 are cleaved as a propeptide — removed in mature form; the sequence is VIL.

This sequence belongs to the small GTPase superfamily. Ras family. In terms of assembly, component of the SHOC2-MRAS-PP1c (SMP) holophosphatase complex consisting of SHOC2, GTP-bound M-Ras/MRAS and the catalytic subunit of protein phosphatase 1 (either PPP1CA, PPP1CB or PPP1CC). Interacts (active GTP-bound form) with both SHOC2 and PP1c (all isoforms) to form a tertiary complex; SHOC2 and PP1c preferably bind M-Ras/MRAS, but they also bind K-Ras/KRAS, N-Ras/NRAS and H-Ras/HRAS. Interacts with RGL3. Interacts (active GTP-bound form preferentially) with RGS14. Mg(2+) serves as cofactor. As to expression, expression highly restricted to the brain and heart.

It is found in the cell membrane. The enzyme catalyses GTP + H2O = GDP + phosphate + H(+). In terms of biological role, signal transducer in the Ras-MAPK signaling pathway that regulates cell proliferation and survival. Core component of the SHOC2-MRAS-PP1c (SMP) holophosphatase complex that regulates the MAPK pathway activation. The formation of the SMP complex only occurs when MRAS is GTP-bound. MRAS has low intrinsic GTPase activity and may require additional factors for activation. The SMP complex specifically dephosphorylates the inhibitory phosphorylation at 'Ser-259' of RAF1 kinase, 'Ser-365' of BRAF kinase and 'Ser-214' of ARAF kinase, stimulating their kinase activities. This is Ras-related protein M-Ras (MRAS) from Homo sapiens (Human).